A 123-amino-acid polypeptide reads, in one-letter code: UPF0102 protein PputW619_0932 (123 aa).

This sequence belongs to the UPF0102 family.

The sequence is that of UPF0102 protein PputW619_0932 from Pseudomonas putida (strain W619).